The sequence spans 172 residues: Caltractin (172 aa).

The tract at residues 1–23 (MQKYGSKKIGATSATSSNKQKVQ) is disordered. The span at 12–21 (TSATSSNKQK) shows a compositional bias: polar residues. EF-hand domains follow at residues 29 to 64 (EQRQEIKEAFDLFDMDGSGKIDAKELKVAMRALGFE), 65 to 99 (PKKEEIKKMISGIDNGSGKIDFNDFLQLMTAKMSE), 101 to 136 (DSHAEIMKAFRLFDEDDSGFITFANLKRVAKDLGEN), and 137 to 172 (MTDEELREMIEEADRSNQGQISKEDFLRIMKKTNLF). Residues aspartate 42, aspartate 44, serine 46, lysine 48, and glutamate 53 each coordinate Ca(2+).

This sequence belongs to the centrin family. As to quaternary structure, monomer.

It is found in the cytoplasm. It localises to the cytoskeleton. The protein resides in the microtubule organizing center. Its subcellular location is the centrosome. Its function is as follows. Plays a fundamental role in microtubule-organizing center structure and function. This Naegleria gruberi (Amoeba) protein is Caltractin (CTN).